A 246-amino-acid chain; its full sequence is tRNA (guanine-N(1)-)-methyltransferase (246 aa).

S-adenosyl-L-methionine contacts are provided by residues G114 and 134–139; that span reads IGDYIL.

Belongs to the RNA methyltransferase TrmD family. In terms of assembly, homodimer.

It localises to the cytoplasm. The enzyme catalyses guanosine(37) in tRNA + S-adenosyl-L-methionine = N(1)-methylguanosine(37) in tRNA + S-adenosyl-L-homocysteine + H(+). Functionally, specifically methylates guanosine-37 in various tRNAs. The protein is tRNA (guanine-N(1)-)-methyltransferase of Coxiella burnetii (strain CbuG_Q212) (Coxiella burnetii (strain Q212)).